The primary structure comprises 45 residues: uncharacterized protein (45 aa).

This is an uncharacterized protein from Dictyostelium discoideum (Social amoeba).